We begin with the raw amino-acid sequence, 500 residues long: Glutelin type-B 5 (500 aa).

Residues 1–24 (MATIAFSRLSIYFCVLLLCHGSMA) form the signal peptide. Disulfide bonds link Cys-45/Cys-78 and Cys-121/Cys-310. 2 Cupin type-1 domains span residues 50 to 245 (LQAF…LVAK) and 316 to 465 (LNIE…EQAR).

Belongs to the 11S seed storage protein (globulins) family. As to quaternary structure, hexamer; each subunit is composed of an acidic and a basic chain derived from a single precursor and linked by a disulfide bond.

Functionally, seed storage protein. This is Glutelin type-B 5 (GLUB5) from Oryza sativa subsp. japonica (Rice).